Reading from the N-terminus, the 240-residue chain is 1-(5-phosphoribosyl)-5-[(5-phosphoribosylamino)methylideneamino] imidazole-4-carboxamide isomerase (240 aa).

D9 functions as the Proton acceptor in the catalytic mechanism. The active-site Proton donor is the D131.

The protein belongs to the HisA/HisF family.

The protein localises to the cytoplasm. It carries out the reaction 1-(5-phospho-beta-D-ribosyl)-5-[(5-phospho-beta-D-ribosylamino)methylideneamino]imidazole-4-carboxamide = 5-[(5-phospho-1-deoxy-D-ribulos-1-ylimino)methylamino]-1-(5-phospho-beta-D-ribosyl)imidazole-4-carboxamide. Its pathway is amino-acid biosynthesis; L-histidine biosynthesis; L-histidine from 5-phospho-alpha-D-ribose 1-diphosphate: step 4/9. This is 1-(5-phosphoribosyl)-5-[(5-phosphoribosylamino)methylideneamino] imidazole-4-carboxamide isomerase from Azobacteroides pseudotrichonymphae genomovar. CFP2.